A 95-amino-acid chain; its full sequence is Sec-independent protein translocase protein TatA (95 aa).

A helical membrane pass occupies residues 1-21 (MFGRLGAPEIILILVVIILLF). The span at 44-55 (AKAMKSEAKADD) shows a compositional bias: basic and acidic residues. The tract at residues 44–95 (AKAMKSEAKADDAAPADPPNPEQSAAQRTIQAAPGDVTSSRPVTEPTDTTKR) is disordered.

The protein belongs to the TatA/E family. The Tat system comprises two distinct complexes: a TatABC complex, containing multiple copies of TatA, TatB and TatC subunits, and a separate TatA complex, containing only TatA subunits. Substrates initially bind to the TatABC complex, which probably triggers association of the separate TatA complex to form the active translocon.

It localises to the cell membrane. Part of the twin-arginine translocation (Tat) system that transports large folded proteins containing a characteristic twin-arginine motif in their signal peptide across membranes. TatA could form the protein-conducting channel of the Tat system. The sequence is that of Sec-independent protein translocase protein TatA from Streptomyces coelicolor (strain ATCC BAA-471 / A3(2) / M145).